We begin with the raw amino-acid sequence, 227 residues long: Fibrillarin-like rRNA/tRNA 2'-O-methyltransferase (227 aa).

S-adenosyl-L-methionine-binding positions include 86 to 87 (TT), 105 to 106 (EF), 130 to 131 (DA), and 150 to 153 (DVAQ).

Belongs to the methyltransferase superfamily. Fibrillarin family. Interacts with nop5. Component of box C/D small ribonucleoprotein (sRNP) particles that contain rpl7ae, FlpA and nop5, plus a guide RNA.

Its function is as follows. Involved in pre-rRNA and tRNA processing. Utilizes the methyl donor S-adenosyl-L-methionine to catalyze the site-specific 2'-hydroxyl methylation of ribose moieties in rRNA and tRNA. Site specificity is provided by a guide RNA that base pairs with the substrate. Methylation occurs at a characteristic distance from the sequence involved in base pairing with the guide RNA. This is Fibrillarin-like rRNA/tRNA 2'-O-methyltransferase from Pyrococcus horikoshii (strain ATCC 700860 / DSM 12428 / JCM 9974 / NBRC 100139 / OT-3).